The primary structure comprises 148 residues: Universal stress protein A (148 aa).

This sequence belongs to the universal stress protein A family. As to quaternary structure, homodimer.

Its subcellular location is the cytoplasm. In terms of biological role, required for resistance to DNA-damaging agents. The protein is Universal stress protein A (uspA) of Yersinia pestis.